The following is a 677-amino-acid chain: Methionine--tRNA ligase (677 aa).

The 'HIGH' region signature appears at 14 to 24 (PYANGSIHLGH). Residues cysteine 145, cysteine 148, cysteine 158, and cysteine 161 each contribute to the Zn(2+) site. The 'KMSKS' region motif lies at 331 to 335 (KMSKS). Residue lysine 334 participates in ATP binding. Positions 575 to 677 (AFAAVDLRIA…SGAKPGQRVK (103 aa)) constitute a tRNA-binding domain.

The protein belongs to the class-I aminoacyl-tRNA synthetase family. MetG type 1 subfamily. In terms of assembly, homodimer. Requires Zn(2+) as cofactor.

It localises to the cytoplasm. It catalyses the reaction tRNA(Met) + L-methionine + ATP = L-methionyl-tRNA(Met) + AMP + diphosphate. Is required not only for elongation of protein synthesis but also for the initiation of all mRNA translation through initiator tRNA(fMet) aminoacylation. In Pseudomonas aeruginosa (strain LESB58), this protein is Methionine--tRNA ligase.